Here is a 34-residue protein sequence, read N- to C-terminus: Thermomycolin (34 aa).

Serine 33 functions as the Charge relay system in the catalytic mechanism.

This sequence belongs to the peptidase S8 family.

It is found in the secreted. It carries out the reaction Rather non-specific hydrolysis of proteins. Preferential cleavage: -Ala-|-Xaa-, -Tyr-|-Xaa-, -Phe-|-Xaa- in small molecular substrates.. In terms of biological role, this is an extracellular proteinase with a general specificity for apolar residues. This is Thermomycolin from Malbranchea cinnamomea (Thermophilic fungus).